The primary structure comprises 35 residues: Riboflavin-binding protein (35 aa).

Cys5 and Cys32 are disulfide-bonded.

This sequence belongs to the folate receptor family.

Required for the transport of riboflavin to the developing oocyte. This is Riboflavin-binding protein from Struthio camelus (Common ostrich).